The sequence spans 227 residues: Cytidylate kinase (227 aa).

Position 7-15 (7-15) interacts with ATP; sequence GPAGSGKST.

This sequence belongs to the cytidylate kinase family. Type 1 subfamily.

The protein resides in the cytoplasm. It catalyses the reaction CMP + ATP = CDP + ADP. The enzyme catalyses dCMP + ATP = dCDP + ADP. This chain is Cytidylate kinase, found in Salinibacter ruber (strain DSM 13855 / M31).